A 317-amino-acid chain; its full sequence is HTH-type transcriptional regulator MetR (317 aa).

Positions 1-59 constitute an HTH lysR-type domain; that stretch reads MIEVKHLKTLQALRNCGSLAAAAATLHQTQSALSHQFSDLEQRLGFRLFVRKSQPLRFT. The H-T-H motif DNA-binding region spans 19 to 38; sequence LAAAAATLHQTQSALSHQFS.

The protein belongs to the LysR transcriptional regulatory family.

The protein resides in the cytoplasm. Functionally, control of the last step in methionine biosynthesis; MetR is a positive activator of the metA, metE and metH genes. It is also a negative regulator of its own expression. The polypeptide is HTH-type transcriptional regulator MetR (metR) (Escherichia coli O157:H7).